The following is a 37-amino-acid chain: Large ribosomal subunit protein bL36c (37 aa).

Belongs to the bacterial ribosomal protein bL36 family.

It is found in the plastid. The protein resides in the chloroplast. The polypeptide is Large ribosomal subunit protein bL36c (Cyanidioschyzon merolae (strain NIES-3377 / 10D) (Unicellular red alga)).